Here is a 489-residue protein sequence, read N- to C-terminus: 2-(3-amino-3-carboxypropyl)histidine synthase subunit 2 (489 aa).

Met-1 is subject to N-acetylmethionine. At Ser-7 the chain carries Phosphoserine. Cys-89, Cys-110, and Cys-341 together coordinate [4Fe-4S] cluster. The residue at position 446 (Ser-446) is a Phosphoserine. Thr-467 bears the Phosphothreonine mark. Ser-488 carries the phosphoserine modification.

This sequence belongs to the DPH1/DPH2 family. DPH2 subfamily. Component of the 2-(3-amino-3-carboxypropyl)histidine synthase complex composed of DPH1, DPH2, DPH3 and a NADH-dependent reductase. Interacts with DPH1. Requires [4Fe-4S] cluster as cofactor.

Its pathway is protein modification; peptidyl-diphthamide biosynthesis. Its function is as follows. Required for the first step of diphthamide biosynthesis, a post-translational modification of histidine which occurs in elongation factor 2. DPH1 and DPH2 transfer a 3-amino-3-carboxypropyl (ACP) group from S-adenosyl-L-methionine (SAM) to a histidine residue, the reaction is assisted by a reduction system comprising DPH3 and a NADH-dependent reductase. Facilitates the reduction of the catalytic iron-sulfur cluster found in the DPH1 subunit. This chain is 2-(3-amino-3-carboxypropyl)histidine synthase subunit 2 (Dph2), found in Mus musculus (Mouse).